The primary structure comprises 176 residues: Phosphopantetheine adenylyltransferase (176 aa).

Thr-11 is a substrate binding site. ATP contacts are provided by residues 11–12 (TF) and His-19. Lys-43, Leu-93, and Arg-107 together coordinate substrate. ATP-binding positions include Glu-117 and 141 to 147 (LSVVSSS).

This sequence belongs to the bacterial CoaD family. In terms of assembly, homohexamer. It depends on Mg(2+) as a cofactor.

It localises to the cytoplasm. It catalyses the reaction (R)-4'-phosphopantetheine + ATP + H(+) = 3'-dephospho-CoA + diphosphate. It functions in the pathway cofactor biosynthesis; coenzyme A biosynthesis; CoA from (R)-pantothenate: step 4/5. In terms of biological role, reversibly transfers an adenylyl group from ATP to 4'-phosphopantetheine, yielding dephospho-CoA (dPCoA) and pyrophosphate. The chain is Phosphopantetheine adenylyltransferase from Tropheryma whipplei (strain TW08/27) (Whipple's bacillus).